The following is a 342-amino-acid chain: Inositol-tetrakisphosphate 1-kinase 1 (342 aa).

1D-myo-inositol 6-phosphate-binding residues include Lys28 and Lys70. Residues Arg105 and Lys155 each contribute to the ATP site. The 217-residue stretch at 116–332 (DHAADQDSTF…HKDGVGNQQE (217 aa)) folds into the ATP-grasp domain. Positions 161 and 166 each coordinate 1D-myo-inositol 6-phosphate. ATP-binding residues include His166, Gln187, and Val190. 2 residues coordinate 1D-myo-inositol 6-phosphate: Lys198 and Tyr200. ATP is bound at residue Ser213. The catalytic specificity elements (CSE) stretch occupies residues 219–247 (PEDDASAQGSVSFSQVSNLPTERTAEEYY). Residue Asn280 participates in 1D-myo-inositol 6-phosphate binding. Mg(2+) is bound at residue Asp282. 3 residues coordinate ATP: Ile296, Asp297, and Asn299. Asp297 and Asn299 together coordinate Mg(2+). Residues Asn299, Gly303, and Lys306 each contribute to the 1D-myo-inositol 6-phosphate site.

Belongs to the ITPK1 family. In terms of assembly, monomer. Requires Mg(2+) as cofactor. In terms of tissue distribution, expressed in the embryo of 15 day after pollination. Expressed in kernels at earlier stages but at very low levels. Expression in the embryo peaks at 15 days after pollination and then declines. No expression is detected from endosperm and vegetative tissues.

It carries out the reaction 1D-myo-inositol 3,4,5,6-tetrakisphosphate + ATP = 1D-myo-inositol 1,3,4,5,6-pentakisphosphate + ADP + H(+). The catalysed reaction is 1D-myo-inositol 1,3,4-trisphosphate + ATP = 1D-myo-inositol 1,3,4,5-tetrakisphosphate + ADP + H(+). The enzyme catalyses 1D-myo-inositol 1,3,4-trisphosphate + ATP = 1D-myo-inositol 1,3,4,6-tetrakisphosphate + ADP + H(+). It catalyses the reaction 1D-myo-inositol 1,2,3,4,5-pentakisphosphate + ATP = 3-diphospho-1D-myo-inositol 1,2,4,5-tetrakisphosphate + ADP. It carries out the reaction 1D-myo-inositol hexakisphosphate + ATP = 5-diphospho-1D-myo-inositol 1,2,3,4,6-pentakisphosphate + ADP. Functionally, kinase that can phosphorylate various inositol polyphosphate such as Ins(3,4,5,6)P4 or Ins(1,3,4)P3 and participates in phytic acid biosynthesis in developing seeds. Phosphorylates Ins(3,4,5,6)P4 at position 1 to form Ins(1,3,4,5,6)P5. This reaction is thought to have regulatory importance, since Ins(3,4,5,6)P4 is an inhibitor of plasma membrane Ca(2+)-activated Cl(-) channels, while Ins(1,3,4,5,6)P5 is not. Also phosphorylates Ins(1,3,4)P3 on O-5 and O-6 to form Ins(1,3,4,6)P4, an essential molecule in the hexakisphosphate (InsP6) pathway. Also able to phosphorylate Ins(3,5,6)P3 but not Ins(1,4,5)P3, Ins(2,4,5)P3, Ins(1,3,4,6)P4 nor Ins(1,3,5,6)P4. Has higher specific activity on Ins(3,4,5,6)P4 than Ins(1,3,4)P3 and Ins(3,5,6)P3. Can also could use Ins(1,2,5,6)P4 as a substrate. Able to add a beta-phosphate to the 3 positions of Ins(1,2,3,4,5)P5 and to add beta-phosphate to InsP6 to yield 5-InsP7, thus exhibiting InsP6 kinase activity. Also has Ins(1,3,4,5,6)P5 phosphatase activity. This is Inositol-tetrakisphosphate 1-kinase 1 from Zea mays (Maize).